Reading from the N-terminus, the 21-residue chain is Peptide PGLa-R4 (21 aa).

At leucine 21 the chain carries Leucine amide.

In terms of tissue distribution, expressed by the skin glands.

It localises to the secreted. Antimicrobial peptide. This chain is Peptide PGLa-R4, found in Xenopus ruwenzoriensis (Uganda clawed frog).